The sequence spans 553 residues: Arginine--tRNA ligase (553 aa).

The short motif at 130–140 is the 'HIGH' region element; it reads ANPTGDLHIGH.

It belongs to the class-I aminoacyl-tRNA synthetase family. As to quaternary structure, monomer.

The protein localises to the cytoplasm. The enzyme catalyses tRNA(Arg) + L-arginine + ATP = L-arginyl-tRNA(Arg) + AMP + diphosphate. The sequence is that of Arginine--tRNA ligase from Staphylococcus epidermidis (strain ATCC 12228 / FDA PCI 1200).